The following is a 122-amino-acid chain: Small ribosomal subunit protein uS13 (122 aa).

Positions 95 to 122 (GLPVHGQRTHTNARTRKGPRRGAVGKKK) are disordered.

This sequence belongs to the universal ribosomal protein uS13 family. As to quaternary structure, part of the 30S ribosomal subunit. Forms a loose heterodimer with protein S19. Forms two bridges to the 50S subunit in the 70S ribosome.

Located at the top of the head of the 30S subunit, it contacts several helices of the 16S rRNA. In the 70S ribosome it contacts the 23S rRNA (bridge B1a) and protein L5 of the 50S subunit (bridge B1b), connecting the 2 subunits; these bridges are implicated in subunit movement. Contacts the tRNAs in the A and P-sites. The chain is Small ribosomal subunit protein uS13 from Nitratidesulfovibrio vulgaris (strain DSM 19637 / Miyazaki F) (Desulfovibrio vulgaris).